We begin with the raw amino-acid sequence, 68 residues long: Large ribosomal subunit protein uL29 (68 aa).

It belongs to the universal ribosomal protein uL29 family.

The sequence is that of Large ribosomal subunit protein uL29 from Chlorobaculum parvum (strain DSM 263 / NCIMB 8327) (Chlorobium vibrioforme subsp. thiosulfatophilum).